A 388-amino-acid polypeptide reads, in one-letter code: Probable E3 ubiquitin-protein ligase LOG2 (388 aa).

The interval 1–43 (MGNISSSGGEGRRRRRRNHTAAPPPPPPPPSSSLPPPPLPTEI) is disordered. Glycine 2 is lipidated: N-myristoyl glycine. The span at 22-40 (APPPPPPPPSSSLPPPPLP) shows a compositional bias: pro residues. Residues 159 to 281 (FTFDATVSGR…GEIKIRVVKQ (123 aa)) form a DAR2 domain region. The segment at 319–358 (CVICLSEPRDTTVLPCRHMCMCSGCAKVLRFQTNRCPICR) adopts an RING-type; atypical zinc-finger fold. The segment at 368 to 388 (KVHGNNGSGNNTGQGETVEQE) is disordered.

It belongs to the RING-type zinc finger family. LOG2 subfamily. As to quaternary structure, interacts with GDU1. Post-translationally, myristoylated (in vitro). In terms of tissue distribution, expressed in the vascular tissues in both phloem and xylem parenchyma cells.

Its subcellular location is the cell membrane. It carries out the reaction S-ubiquitinyl-[E2 ubiquitin-conjugating enzyme]-L-cysteine + [acceptor protein]-L-lysine = [E2 ubiquitin-conjugating enzyme]-L-cysteine + N(6)-ubiquitinyl-[acceptor protein]-L-lysine.. It participates in protein modification; protein ubiquitination. Its function is as follows. Acts as an E3 ubiquitin-protein ligase, or as part of E3 complex, which accepts ubiquitin from specific E2 ubiquitin-conjugating enzymes and then transfers it to substrates (in vitro). Required for GLUTAMINE DUMPER 1(GDU1)-induced amino acid secretion and for amino acid homeostasis. Ubiquitinates GDU1 (in vitro). In Arabidopsis thaliana (Mouse-ear cress), this protein is Probable E3 ubiquitin-protein ligase LOG2 (LOG2).